The following is a 444-amino-acid chain: Sperm-associated antigen 4 protein (444 aa).

The disordered stretch occupies residues 1-109 (MRRNPRPGSA…GGASEPSGSP (109 aa)). The span at 19–36 (NFYSENSNSSHSATSGDS) shows a compositional bias: low complexity. The next 2 membrane-spanning stretches (helical) occupy residues 137 to 159 (FLSL…LVCV) and 166 to 188 (IRFL…WGLL). A coiled-coil region spans residues 204-241 (LSQYHHRVHSQGQQLQQLQAELSKLHKEVTSVRAAHSE). The region spanning 267–428 (GASIDLEKTS…YRVRAHGVRI (162 aa)) is the SUN domain.

As to quaternary structure, self-associates. Interacts with ODF1. May associate with microtubules. Interacts with SUN3 and SYNE1; suggesting the formation of a LINC complexs; a SUN domain-based heterotrimer of SPAG4 and SUN3 may associate with SYNE1. Interacts with SEPT12 and LMNB1; during spermatogenesis. In terms of tissue distribution, testis specific. Exclusively expressed in spermatids.

Its subcellular location is the membrane. It localises to the cytoplasm. The protein localises to the cytoskeleton. The protein resides in the flagellum axoneme. It is found in the nucleus envelope. Its subcellular location is the nucleus inner membrane. In terms of biological role, involved in spermatogenesis. Required for sperm head formation but not required to establish and maintain general polarity of the sperm head. Required for anchoring and organization of the manchette. Required for targeting of SUN3 and probably SYNE1 through a probable SUN1:SYNE3 LINC complex to the nuclear envelope and involved in accurate posterior sperm head localization of the complex. May anchor SUN3 the nuclear envelope. Involved in maintenance of the nuclear envelope integrity. May assist the organization and assembly of outer dense fibers (ODFs), a specific structure of the sperm tail. The chain is Sperm-associated antigen 4 protein (Spag4) from Rattus norvegicus (Rat).